Reading from the N-terminus, the 83-residue chain is Small ribosomal subunit protein eS21 (83 aa).

Belongs to the eukaryotic ribosomal protein eS21 family. In terms of assembly, component of the 40S small ribosomal subunit. Interacts with sta.

It is found in the cytoplasm. It localises to the cytosol. The protein resides in the rough endoplasmic reticulum. Its function is as follows. May be an associated component of the ribosome rather than a core structural subunit. May act as a translation initiation factor. Has a role in regulation of cell proliferation in the hematopoietic organs and the imaginal disks of larva. This Drosophila erecta (Fruit fly) protein is Small ribosomal subunit protein eS21 (RpS21).